The following is a 1013-amino-acid chain: Zinc finger and BTB domain-containing protein 4 (1013 aa).

One can recognise a BTB domain in the interval 30-152 (CDVTLIAGDT…IYSARLALPG (123 aa)). Lysine 40 is covalently cross-linked (Glycyl lysine isopeptide (Lys-Gly) (interchain with G-Cter in SUMO2)). Over residues 67 to 110 (LPPATGGAAPNPATTTAASSSSSSSSSSSSSSSSASSSSSSSSS) the composition is skewed to low complexity. Disordered stretches follow at residues 67–124 (LPPA…SPPR) and 183–221 (DAWV…AEAQ). The span at 111–121 (SPPPASPPASS) shows a compositional bias: pro residues. The interaction with CBFA2T3 stretch occupies residues 186-348 (VPPTPAPMAT…CRYCEKVFAL (163 aa)). The C2H2-type 1; atypical zinc finger occupies 234-256 (LPCPQCGKSFIHPKRLQTHEAQC). A disordered region spans residues 257-281 (RRGASTRGSTGLGAGGAGPGGPAGV). A compositionally biased stretch (gly residues) spans 266–279 (TGLGAGGAGPGGPA). 3 C2H2-type zinc fingers span residues 309–331 (YVCA…SNVH), 337–359 (YPCR…EVWH), and 365–388 (YQCI…RAFH). A Phosphoserine modification is found at serine 391. Disordered regions lie at residues 428-765 (KTYS…STRF), 783-852 (HGQR…DPII), 883-904 (GREP…AGEG), and 972-1013 (VNPQ…GDVG). The segment covering 453 to 470 (ASPPPGPPPAPEPGPPPS) has biased composition (pro residues). 2 stretches are compositionally biased toward low complexity: residues 496-506 (TASTGGSQAAS) and 531-554 (ATPT…ATTT). Lysine 573 participates in a covalent cross-link: Glycyl lysine isopeptide (Lys-Gly) (interchain with G-Cter in SUMO2). Residues 576-590 (GGIGGGGGPPTGAGR) show a composition bias toward gly residues. The segment covering 608 to 625 (IGEEAIVKRRISETDLRP) has biased composition (basic and acidic residues). Residue lysine 615 forms a Glycyl lysine isopeptide (Lys-Gly) (interchain with G-Cter in SUMO2) linkage. Positions 627 to 663 (ELSGEEMEESEEDEEEEDEEEEEEDEEESKAGGEDQL) form a coiled coil. Residues 629–654 (SGEEMEESEEDEEEEDEEEEEEDEEE) show a composition bias toward acidic residues. The segment covering 678–689 (AAGGASVGGSGL) has biased composition (gly residues). C2H2-type zinc fingers lie at residues 726 to 748 (HRCG…QEAH) and 765 to 787 (FTCP…GQRH). Phosphothreonine; by HIPK2 occurs at positions 795 and 797. The segment covering 836 to 846 (TAAEEASETAS) has biased composition (low complexity). The span at 883–902 (GREPGGGRGKSGSEGPVGAG) shows a compositional bias: gly residues. The segment covering 976 to 995 (AAPPAPPTPPPPTLPPPIPP) has biased composition (pro residues). Threonine 983 carries the post-translational modification Phosphothreonine; by HIPK2. Residues 997–1013 (GEGERAGVERTQKGDVG) show a composition bias toward basic and acidic residues.

Interacts with HIPK2. Interacts with CBFA2T3. Interacts with ZBTB38. In terms of processing, phosphorylated by HIPK2. This phosphorylation reduces stability and triggers ZBTB4 protein degradation in response to DNA damage.

The protein localises to the nucleus. It is found in the chromosome. Transcriptional repressor with bimodal DNA-binding specificity. Represses transcription in a methyl-CpG-dependent manner. Binds with a higher affinity to methylated CpG dinucleotides in the consensus sequence 5'-CGCG-3' but can also bind to the non-methylated consensus sequence 5'-CTGCNA-3' also known as the consensus kaiso binding site (KBS). Can also bind specifically to a single methyl-CpG pair and can bind hemimethylated DNA but with a lower affinity compared to methylated DNA. Plays a role in postnatal myogenesis, may be involved in the regulation of satellite cells self-renewal. This chain is Zinc finger and BTB domain-containing protein 4 (ZBTB4), found in Homo sapiens (Human).